Consider the following 142-residue polypeptide: Class II hydrophobin 7 (142 aa).

A signal peptide spans 1–16; sequence MKFLTVAIVLAAAASA. 4 disulfide bridges follow: C73–C123, C84–C114, C85–C97, and C124–C135.

This sequence belongs to the cerato-ulmin hydrophobin family. In terms of assembly, homodimer. Homodimers further self-assemble to form highly ordered films at water-air interfaces through intermolecular interactions.

Its subcellular location is the secreted. The protein localises to the cell wall. In terms of biological role, aerial growth, conidiation, and dispersal of filamentous fungi in the environment rely upon a capability of their secreting small amphipathic proteins called hydrophobins (HPBs) with low sequence identity. Class I can self-assemble into an outermost layer of rodlet bundles on aerial cell surfaces, conferring cellular hydrophobicity that supports fungal growth, development and dispersal; whereas Class II form highly ordered films at water-air interfaces through intermolecular interactions but contribute nothing to the rodlet structure. This is Class II hydrophobin 7 from Trichoderma asperellum (strain ATCC 204424 / CBS 433.97 / NBRC 101777).